The following is a 278-amino-acid chain: Heat stress transcription factor C-2b (278 aa).

Gly residues predominate over residues 105–114; sequence AAGGGGGGGG. The segment at 105-132 is disordered; the sequence is AAGGGGGGGGGKRRDASADGGGGGGDED. A hydrophobic repeat HR-A/B region spans residues 143-179; that stretch reads LKQEQRTIDDRVAAMWRRVQETERRPKQMLAFLLKVV. The Nuclear localization signal signature appears at 219-222; the sequence is KRAR.

This sequence belongs to the HSF family. Class C subfamily. As to quaternary structure, homotrimer. Exhibits temperature-dependent phosphorylation.

Its subcellular location is the nucleus. Transcriptional regulator that specifically binds DNA of heat shock promoter elements (HSE). In Oryza sativa subsp. japonica (Rice), this protein is Heat stress transcription factor C-2b (HSFC2B).